The sequence spans 509 residues: Light-independent protochlorophyllide reductase subunit B (509 aa).

Asp-36 contributes to the [4Fe-4S] cluster binding site. Asp-298 (proton donor) is an active-site residue. Residue 433–434 participates in substrate binding; sequence GM.

It belongs to the ChlB/BchB/BchZ family. In terms of assembly, protochlorophyllide reductase is composed of three subunits; ChlL, ChlN and ChlB. Forms a heterotetramer of two ChlB and two ChlN subunits. [4Fe-4S] cluster is required as a cofactor.

The protein localises to the plastid. Its subcellular location is the chloroplast. It catalyses the reaction chlorophyllide a + oxidized 2[4Fe-4S]-[ferredoxin] + 2 ADP + 2 phosphate = protochlorophyllide a + reduced 2[4Fe-4S]-[ferredoxin] + 2 ATP + 2 H2O. It functions in the pathway porphyrin-containing compound metabolism; chlorophyll biosynthesis (light-independent). In terms of biological role, component of the dark-operative protochlorophyllide reductase (DPOR) that uses Mg-ATP and reduced ferredoxin to reduce ring D of protochlorophyllide (Pchlide) to form chlorophyllide a (Chlide). This reaction is light-independent. The NB-protein (ChlN-ChlB) is the catalytic component of the complex. This is Light-independent protochlorophyllide reductase subunit B from Ephedra altissima (High-climbing jointfir).